The sequence spans 314 residues: DNA-directed RNA polymerase subunit alpha (314 aa).

The interval 1-228 is alpha N-terminal domain (alpha-NTD); it reads MAQFHYECVE…SLFEPLKDIT (228 aa). The alpha C-terminal domain (alpha-CTD) stretch occupies residues 240–314; sequence DPTSQIPIEE…LPQEKVAKAT (75 aa).

Belongs to the RNA polymerase alpha chain family. In cyanobacteria the RNAP catalytic core is composed of 2 alpha, 1 beta, 1 beta', 1 gamma and 1 omega subunit. When a sigma factor is associated with the core the holoenzyme is formed, which can initiate transcription.

It catalyses the reaction RNA(n) + a ribonucleoside 5'-triphosphate = RNA(n+1) + diphosphate. In terms of biological role, DNA-dependent RNA polymerase catalyzes the transcription of DNA into RNA using the four ribonucleoside triphosphates as substrates. The sequence is that of DNA-directed RNA polymerase subunit alpha from Trichodesmium erythraeum (strain IMS101).